Reading from the N-terminus, the 158-residue chain is MAEEKKHYMTLEGKKKLEEELEYLKTERRKEVVERIKIARSFGDLSENSEYDSAKEEQAFVEGRISQIEKMIRNAEIIEESEGDANVVSLGKTVKFVEIPDGEEEEYTIVGSAESDPFEGKISNDSPMAQSLLGHTIDDVVIVNTPGGEMEVKILEIR.

A coiled-coil region spans residues 10-76 (TLEGKKKLEE…QIEKMIRNAE (67 aa)).

It belongs to the GreA/GreB family.

Its function is as follows. Necessary for efficient RNA polymerase transcription elongation past template-encoded arresting sites. The arresting sites in DNA have the property of trapping a certain fraction of elongating RNA polymerases that pass through, resulting in locked ternary complexes. Cleavage of the nascent transcript by cleavage factors such as GreA or GreB allows the resumption of elongation from the new 3'terminus. GreA releases sequences of 2 to 3 nucleotides. The sequence is that of Transcription elongation factor GreA from Halalkalibacterium halodurans (strain ATCC BAA-125 / DSM 18197 / FERM 7344 / JCM 9153 / C-125) (Bacillus halodurans).